A 218-amino-acid chain; its full sequence is Glutathione S-transferase (218 aa).

The region spanning 2–88 (PVTLGYWDIR…YIARKHDLCG (87 aa)) is the GST N-terminal domain. Glutathione contacts are provided by residues 7–8 (YW), 46–50 (WLNEK), 59–60 (NL), and 72–73 (QS). Residues 90 to 208 (TEEERIQLDI…KSSRFSCKQI (119 aa)) form the GST C-terminal domain. Tyr116 contacts substrate.

This sequence belongs to the GST superfamily. Mu family. In terms of assembly, homodimer.

It localises to the cytoplasm. The catalysed reaction is RX + glutathione = an S-substituted glutathione + a halide anion + H(+). Conjugation of reduced glutathione to a wide number of exogenous and endogenous hydrophobic electrophiles. The sequence is that of Glutathione S-transferase from Mesocricetus auratus (Golden hamster).